A 346-amino-acid chain; its full sequence is MDSCEVTKTRIPFKERPDWADVKPVPQDDGPCPVVPIAYTEDFSETMDYFRAIYVADERSTRALQLTGEAIQLNPGNYTVWQFRRVVLEALGVDLREELKFVDRIAGENTKNYQIWHHRRWLAEKLGADAVTNELEFTKKIFSQDAKNYHAWSHRQWVLQALGGWEDELAYCQQLLEDDIYNNSAWNQRYFVVTRSPLLGGLVAMRELEVNYTVQAIRASPENESPWRYLRGLYKNDTQSLVQDSQVASVLWDVLTSQNSHVHALRFLLDLLCHDLEPSQELKSAVDVLTPQSCSPDLALTKKICSILEHADPMRVKYWNWRKSMVRVQLLQSQNAERLANLSVQE.

5 PFTA repeats span residues 59 to 93, 94 to 128, 130 to 164, 165 to 198, and 205 to 239; these read RSTR…ALGV, DLRE…KLGA, AVTN…ALGG, WEDE…RSPL, and MREL…NDTQ.

This sequence belongs to the protein prenyltransferase subunit alpha family. Heterodimer of an alpha and a beta subunit. Requires Mg(2+) as cofactor.

It carries out the reaction L-cysteinyl-[protein] + (2E,6E)-farnesyl diphosphate = S-(2E,6E)-farnesyl-L-cysteinyl-[protein] + diphosphate. It catalyses the reaction geranylgeranyl diphosphate + L-cysteinyl-[protein] = S-geranylgeranyl-L-cysteinyl-[protein] + diphosphate. Essential subunit of both the farnesyltransferase and the geranylgeranyltransferase complex. Contributes to the transfer of a farnesyl or geranylgeranyl moiety from farnesyl or geranylgeranyl diphosphate to a cysteine at the fourth position from the C-terminus of several proteins having the C-terminal sequence Cys-aliphatic-aliphatic-X. The polypeptide is Protein farnesyltransferase/geranylgeranyltransferase type-1 subunit alpha (FTA) (Solanum lycopersicum (Tomato)).